Reading from the N-terminus, the 242-residue chain is Uridylate kinase (242 aa).

12–15 is an ATP binding site; that stretch reads KLSG. Positions 20–25 are involved in allosteric activation by GTP; sequence GNDGFG. Glycine 54 contributes to the UMP binding site. The ATP site is built by glycine 55 and arginine 59. UMP-binding positions include aspartate 74 and 135–142; that span reads TGNPYFST. Asparagine 163, tyrosine 169, and aspartate 172 together coordinate ATP.

It belongs to the UMP kinase family. As to quaternary structure, homohexamer.

Its subcellular location is the cytoplasm. It catalyses the reaction UMP + ATP = UDP + ADP. It participates in pyrimidine metabolism; CTP biosynthesis via de novo pathway; UDP from UMP (UMPK route): step 1/1. With respect to regulation, allosterically activated by GTP. Inhibited by UTP. Catalyzes the reversible phosphorylation of UMP to UDP. The chain is Uridylate kinase from Listeria innocua serovar 6a (strain ATCC BAA-680 / CLIP 11262).